The sequence spans 203 residues: Na(+)-translocating NADH-quinone reductase subunit E (203 aa).

Helical transmembrane passes span Ser11–Val31, Ile35–Leu55, Phe82–Phe102, Gly115–Val135, Met145–Val165, and Leu181–Ile201.

The protein belongs to the NqrDE/RnfAE family. Composed of six subunits; NqrA, NqrB, NqrC, NqrD, NqrE and NqrF.

The protein localises to the cell inner membrane. The catalysed reaction is a ubiquinone + n Na(+)(in) + NADH + H(+) = a ubiquinol + n Na(+)(out) + NAD(+). In terms of biological role, NQR complex catalyzes the reduction of ubiquinone-1 to ubiquinol by two successive reactions, coupled with the transport of Na(+) ions from the cytoplasm to the periplasm. NqrA to NqrE are probably involved in the second step, the conversion of ubisemiquinone to ubiquinol. This chain is Na(+)-translocating NADH-quinone reductase subunit E, found in Dichelobacter nodosus (strain VCS1703A).